The sequence spans 318 residues: Formimidoylglutamase (318 aa).

Mn(2+)-binding residues include histidine 130, aspartate 155, histidine 157, aspartate 159, aspartate 246, and aspartate 248.

The protein belongs to the arginase family. Mn(2+) serves as cofactor.

It carries out the reaction N-formimidoyl-L-glutamate + H2O = formamide + L-glutamate. It functions in the pathway amino-acid degradation; L-histidine degradation into L-glutamate; L-glutamate from N-formimidoyl-L-glutamate (hydrolase route): step 1/1. In terms of biological role, catalyzes the conversion of N-formimidoyl-L-glutamate to L-glutamate and formamide. This chain is Formimidoylglutamase, found in Klebsiella pneumoniae (strain 342).